Consider the following 96-residue polypeptide: Co-chaperonin GroES (96 aa).

Belongs to the GroES chaperonin family. In terms of assembly, heptamer of 7 subunits arranged in a ring. Interacts with the chaperonin GroEL.

The protein resides in the cytoplasm. Together with the chaperonin GroEL, plays an essential role in assisting protein folding. The GroEL-GroES system forms a nano-cage that allows encapsulation of the non-native substrate proteins and provides a physical environment optimized to promote and accelerate protein folding. GroES binds to the apical surface of the GroEL ring, thereby capping the opening of the GroEL channel. This Aggregatibacter actinomycetemcomitans (Actinobacillus actinomycetemcomitans) protein is Co-chaperonin GroES.